A 365-amino-acid chain; its full sequence is Palmitoyltransferase ZDHHC20 (365 aa).

Topologically, residues 1-14 are cytoplasmic; the sequence is MAPCTLWRCCQRTV. Residues 15–35 form a helical membrane-spanning segment; sequence GWVPVLFITFVVVWSYYAYVV. Residues 36–53 are Lumenal-facing; it reads ELCVFTLSGNGENGKAVV. A helical membrane pass occupies residues 54 to 74; that stretch reads YLVAFHLFFVMFVWSYWMTIF. The Cytoplasmic portion of the chain corresponds to 75 to 169; the sequence is TSPASPSKEF…NNCVGFSNYK (95 aa). Positions 126 to 176 constitute a DHHC domain; that stretch reads RYCERCQLIKPDRAHHCSACDMCILKMDHHCPWVNNCVGFSNYKFFLLFLF. Zn(2+) contacts are provided by cysteine 128 and cysteine 131. Substrate-binding positions include lysine 135 and 140 to 143; that span reads HHCS. Zn(2+) contacts are provided by histidine 141, cysteine 142, cysteine 145, cysteine 148, and histidine 155. The active-site S-palmitoyl cysteine intermediate is cysteine 156. Cysteine 162 is a Zn(2+) binding site. The chain crosses the membrane as a helical span at residues 170–190; the sequence is FFLLFLFYSLLYCLFVATTVL. Residues 191–207 are Lumenal-facing; it reads QYFIKFWTNELTDTRAK. A helical transmembrane segment spans residues 208–231; sequence FHVLFLFFVSTMFFISVLSLLSYH. Residues 232–365 lie on the Cytoplasmic side of the membrane; sequence CWLVGKNRTT…NNHVTVAIEN (134 aa). The interval 301-365 is disordered; that stretch reads PEQASVSNQS…NNHVTVAIEN (65 aa). Over residues 302 to 321 the composition is skewed to polar residues; the sequence is EQASVSNQSESARSIGSNQP. Residues serine 305 and serine 330 each carry the phosphoserine modification.

Belongs to the DHHC palmitoyltransferase family. Autopalmitoylated (in vitro).

The protein resides in the golgi apparatus membrane. Its subcellular location is the cell membrane. The protein localises to the cytoplasm. It is found in the perinuclear region. It localises to the endoplasmic reticulum membrane. The protein resides in the endoplasmic reticulum-Golgi intermediate compartment membrane. It catalyses the reaction L-cysteinyl-[protein] + hexadecanoyl-CoA = S-hexadecanoyl-L-cysteinyl-[protein] + CoA. The catalysed reaction is L-cysteinyl-[protein] + tetradecanoyl-CoA = S-tetradecanoyl-L-cysteinyl-[protein] + CoA. It carries out the reaction L-cysteinyl-[protein] + octadecanoyl-CoA = S-octadecanoyl-L-cysteinyl-[protein] + CoA. Its function is as follows. Palmitoyltransferase that could catalyze the addition of palmitate onto various protein substrates. Catalyzes palmitoylation of Cys residues in the cytoplasmic C-terminus of EGFR, and modulates the duration of EGFR signaling by modulating palmitoylation-dependent EGFR internalization and degradation. Has a preference for acyl-CoA with C16 fatty acid chains. Can also utilize acyl-CoA with C14 and C18 fatty acid chains. May palmitoylate CALHM1 subunit of gustatory voltage-gated ion channels and modulate channel gating and kinetics. The polypeptide is Palmitoyltransferase ZDHHC20 (Bos taurus (Bovine)).